Here is a 167-residue protein sequence, read N- to C-terminus: NAD(P)H-quinone oxidoreductase subunit I, chloroplastic (167 aa).

4Fe-4S ferredoxin-type domains lie at 55–84 (GRIH…VDWK) and 95–124 (LNYS…MTEE). Positions 64, 67, 70, 74, 104, 107, 110, and 114 each coordinate [4Fe-4S] cluster.

It belongs to the complex I 23 kDa subunit family. As to quaternary structure, NDH is composed of at least 16 different subunits, 5 of which are encoded in the nucleus. [4Fe-4S] cluster is required as a cofactor.

Its subcellular location is the plastid. It is found in the chloroplast thylakoid membrane. The enzyme catalyses a plastoquinone + NADH + (n+1) H(+)(in) = a plastoquinol + NAD(+) + n H(+)(out). The catalysed reaction is a plastoquinone + NADPH + (n+1) H(+)(in) = a plastoquinol + NADP(+) + n H(+)(out). Functionally, NDH shuttles electrons from NAD(P)H:plastoquinone, via FMN and iron-sulfur (Fe-S) centers, to quinones in the photosynthetic chain and possibly in a chloroplast respiratory chain. The immediate electron acceptor for the enzyme in this species is believed to be plastoquinone. Couples the redox reaction to proton translocation, and thus conserves the redox energy in a proton gradient. The polypeptide is NAD(P)H-quinone oxidoreductase subunit I, chloroplastic (Jasminum nudiflorum (Winter jasmine)).